Here is a 231-residue protein sequence, read N- to C-terminus: Hypoxanthine-guanine-xanthine phosphoribosyltransferase (231 aa).

GMP is bound by residues lysine 77, 144–152 (EDIIDTGKT), lysine 176, and aspartate 204. Aspartate 148 (proton acceptor) is an active-site residue. Residue aspartate 204 coordinates Mg(2+).

The protein belongs to the purine/pyrimidine phosphoribosyltransferase family. In terms of assembly, homotetramer. It depends on Mg(2+) as a cofactor.

It is found in the cytoplasm. The enzyme catalyses IMP + diphosphate = hypoxanthine + 5-phospho-alpha-D-ribose 1-diphosphate. It catalyses the reaction GMP + diphosphate = guanine + 5-phospho-alpha-D-ribose 1-diphosphate. It carries out the reaction XMP + diphosphate = xanthine + 5-phospho-alpha-D-ribose 1-diphosphate. Its pathway is purine metabolism; GMP biosynthesis via salvage pathway; GMP from guanine: step 1/1. The protein operates within purine metabolism; IMP biosynthesis via salvage pathway; IMP from hypoxanthine: step 1/1. It functions in the pathway purine metabolism; XMP biosynthesis via salvage pathway; XMP from xanthine: step 1/1. Functionally, catalyzes the transfer of a ribosyl phosphate group from 5-phosphoribose 1-diphosphate to the N(9) of hypoxanthine, guanine or xanthine, leading to IMP, GMP and XMP, respectively. Plays a central role in the generation of purine nucleotides through the purine salvage pathway. This chain is Hypoxanthine-guanine-xanthine phosphoribosyltransferase (LACZ), found in Plasmodium falciparum (isolate K1 / Thailand).